The chain runs to 899 residues: Translation initiation factor IF-2 (899 aa).

Disordered regions lie at residues 94 to 167 (TFTK…VVVK) and 259 to 309 (FNQE…HGFE). Over residues 107–121 (AKARQETEERTRPQE) the composition is skewed to basic and acidic residues. Low complexity predominate over residues 147-164 (RAAQQKETAKTTSTTTEV). Residues 399–568 (TRPPVVTIMG…LIQSELMELK (170 aa)) enclose the tr-type G domain. Positions 408 to 415 (GHVDHGKT) are G1. Residue 408 to 415 (GHVDHGKT) coordinates GTP. The tract at residues 433–437 (GITQH) is G2. The tract at residues 454 to 457 (DTPG) is G3. GTP contacts are provided by residues 454–458 (DTPGH) and 508–511 (NKMD). Residues 508–511 (NKMD) form a G4 region. The segment at 544–546 (SAH) is G5.

This sequence belongs to the TRAFAC class translation factor GTPase superfamily. Classic translation factor GTPase family. IF-2 subfamily.

It localises to the cytoplasm. Functionally, one of the essential components for the initiation of protein synthesis. Protects formylmethionyl-tRNA from spontaneous hydrolysis and promotes its binding to the 30S ribosomal subunits. Also involved in the hydrolysis of GTP during the formation of the 70S ribosomal complex. This is Translation initiation factor IF-2 from Acinetobacter baylyi (strain ATCC 33305 / BD413 / ADP1).